A 369-amino-acid chain; its full sequence is Outer membrane protein P2 (369 aa).

A signal peptide spans Met-1–Ala-20.

It belongs to the Gram-negative porin family. As to quaternary structure, homotrimer.

The protein resides in the cell outer membrane. Its function is as follows. Forms pores that allow passive diffusion of small molecules across the outer membrane. This Haemophilus influenzae protein is Outer membrane protein P2 (ompP2).